Here is a 1522-residue protein sequence, read N- to C-terminus: Histone-lysine N-methyltransferase EZH2 (1522 aa).

The disordered stretch occupies residues 1–196 (MSPARGDANA…PKTPTPKNTE (196 aa)). The span at 39–61 (NRENLRDRDRADKLEKLEKDAHA) shows a compositional bias: basic and acidic residues. 2 stretches are compositionally biased toward low complexity: residues 64 to 76 (QTQT…PVTV) and 103 to 130 (RGST…SPSL). Polar residues predominate over residues 141–162 (ILASRTSRFSNRTGIRDSQSPS). A compositionally biased stretch (low complexity) spans 180-195 (ATSNTPAPKTPTPKNT). Positions 190–220 (PTPKNTEWTVDKIASALSVLAEEVPQNHSRL) are SBD domain. The interval 221–250 (VNFLLEETEKRAPQPRHLSKTDPFAHMKSK) is EBD domain. The interval 251-300 (AIDANRPRPEGVPTMDVKFKQHSGEYGKSRNSGRRFQYPVVCIKPDREPV) is BAM domain. The SAL domain stretch occupies residues 301 to 320 (PPYRFHHAEIRKNILALNSQ). Residues 321–360 (LNFVPHLRDVDPNSAEEQKYSAWLMDLENLDSKSGFKIQP) form an SRM domain region. An SANT1L domain region spans residues 361 to 480 (RSQKIAKRAQ…PIFDNKRAKD (120 aa)). The segment at 406-426 (PESDDSMTPQQKSNLLDTYSD) is disordered. Polar residues predominate over residues 411–422 (SMTPQQKSNLLD). The segment at 481–560 (APGSQKPPDE…EQRQKTEGGS (80 aa)) is MCSS domain. Zn(2+)-binding residues include cysteine 508, cysteine 511, cysteine 516, histidine 518, cysteine 570, cysteine 574, cysteine 615, cysteine 625, cysteine 685, histidine 687, cysteine 691, cysteine 697, cysteine 699, cysteine 709, cysteine 713, cysteine 715, cysteine 720, cysteine 727, cysteine 729, cysteine 736, cysteine 746, cysteine 748, cysteine 755, cysteine 760, cysteine 763, and cysteine 784. An SANT2L domain region spans residues 561–650 (ANAPPAHPPC…PVEPRTIPKQ (90 aa)). The 123-residue stretch at 658–780 (RRKKQLMSDW…PENAYDEVLH (123 aa)) folds into the CXC domain. Positions 795–919 (KAVVLGKSQL…AGEELFFNYG (125 aa)) constitute an SET domain. S-adenosyl-L-homocysteine is bound by residues tyrosine 809, lysine 852, serine 854, and tyrosine 855. Residues tyrosine 809, lysine 852, serine 854, tyrosine 855, asparagine 880, histidine 881, and threonine 926 each coordinate S-adenosyl-L-methionine. Histidine 881 is a binding site for S-adenosyl-L-homocysteine. Lysine 927 contributes to the S-adenosyl-L-homocysteine binding site. The interval 933 to 1522 (NEQSGAETTP…KPARYRDEGE (590 aa)) is disordered. Positions 935–946 (QSGAETTPQQPK) are enriched in polar residues. Positions 971-988 (GFDDDDRDGNDSDPDDLW) are enriched in acidic residues. Residues 992 to 1024 (QQQQQQQQQQQQQQQQQQQQQQQQQQQQQQQQQ) are compositionally biased toward low complexity. Positions 1025–1038 (AQKPQPSTSHQPQS) are enriched in polar residues. Basic and acidic residues predominate over residues 1053–1066 (SPDKQLRRENHDAQ). The span at 1072–1091 (QFQQQEQQQQQQQQQQQQQQ) shows a compositional bias: low complexity. The segment covering 1127 to 1136 (DSSSGGSANE) has biased composition (polar residues). A compositionally biased stretch (basic residues) spans 1142–1162 (KPSRRGGARPGAGRKPKHRPP). 2 stretches are compositionally biased toward basic and acidic residues: residues 1207 to 1221 (SDSK…TDKE) and 1228 to 1238 (VNEKDREKGRD). Residues 1255 to 1299 (KSAPSPAKKQASSPTKISDSNRTTSKNTSSNNNNNTNNNNNNNNN) show a composition bias toward low complexity. Residues 1316 to 1330 (HLTNSQPAALSPSAT) are compositionally biased toward polar residues. Composition is skewed to low complexity over residues 1355-1385 (STMT…SSSS) and 1415-1428 (SSSL…SVFS). A compositionally biased stretch (polar residues) spans 1455-1464 (SGLNSTSLSQ). Residues 1465–1494 (ERGEKHEKHEKEKPKEKKGEKERERERDRS) show a composition bias toward basic and acidic residues.

It belongs to the class V-like SAM-binding methyltransferase superfamily. Histone-lysine methyltransferase family. EZ subfamily. In terms of assembly, component of the polycomb repressive complex 2 (PRC2) that consists of four core subunits icluding EZH2, EED, SUZ12, and RBBP4, among which EZH2 is the catalytic subunit and which minimally requires EED and SUZ12 for catalysis.

Its subcellular location is the nucleus. It carries out the reaction L-lysyl(27)-[histone H3] + 3 S-adenosyl-L-methionine = N(6),N(6),N(6)-trimethyl-L-lysyl(27)-[histone H3] + 3 S-adenosyl-L-homocysteine + 3 H(+). With respect to regulation, the end product of PRC2 catalysis, H3K27me3, interacts with EED to stimulate the enzymatic activity of PRC2 allosterically. The enzymatic activity of PRC2 is regulated in a very complex manner and PCR2 can adopt different stages including the autoinhibited (A); SAM-bound autoinhibited (A'), basal (B), and H3K27me3-stimulated (S) stages. Actictivity is inhibited by pyridone inhibitors such as GSK126. Functionally, catalytic subunit of the of the Polycomb Repressive Complex 2 (PRC2), a histone H3 lysine methyltransferase responsible for generating mono-, di-, and tri-methylation on Lys27 (H3K27me1, H3K27me2 and H3K27me3). The tri-methylated form is known to be critical in gene repression, and its proper placement is essential in defining repression patterns during development. The PRC2 complex interacts with thousands of RNA species in vivo, but the physiological function of RNA binding has still to be determined. The protein is Histone-lysine N-methyltransferase EZH2 of Chaetomium thermophilum (strain DSM 1495 / CBS 144.50 / IMI 039719) (Thermochaetoides thermophila).